Reading from the N-terminus, the 305-residue chain is Glycine--tRNA ligase alpha subunit (305 aa).

Belongs to the class-II aminoacyl-tRNA synthetase family. As to quaternary structure, tetramer of two alpha and two beta subunits.

The protein localises to the cytoplasm. The catalysed reaction is tRNA(Gly) + glycine + ATP = glycyl-tRNA(Gly) + AMP + diphosphate. The chain is Glycine--tRNA ligase alpha subunit (glyQ) from Vibrio cholerae serotype O1 (strain ATCC 39315 / El Tor Inaba N16961).